The primary structure comprises 191 residues: Putative endogenous retrovirus group K member 11-1 Env polyprotein (191 aa).

The truncated surface protein stretch occupies residues Met1–Val191.

Belongs to the beta type-B retroviral envelope protein family. HERV class-II K(HML-8) env subfamily. As to expression, cerebellum and testis.

It localises to the virion. Its function is as follows. Retroviral envelope proteins mediate receptor recognition and membrane fusion during early infection. Endogenous envelope proteins may have kept, lost or modified their original function during evolution. The chain is Putative endogenous retrovirus group K member 11-1 Env polyprotein (ERVK11-1) from Homo sapiens (Human).